The primary structure comprises 149 residues: D-aminoacyl-tRNA deacylase (149 aa).

Residues 137 to 138 (GP) carry the Gly-cisPro motif, important for rejection of L-amino acids motif.

The protein belongs to the DTD family. As to quaternary structure, homodimer.

Its subcellular location is the cytoplasm. It catalyses the reaction glycyl-tRNA(Ala) + H2O = tRNA(Ala) + glycine + H(+). The catalysed reaction is a D-aminoacyl-tRNA + H2O = a tRNA + a D-alpha-amino acid + H(+). An aminoacyl-tRNA editing enzyme that deacylates mischarged D-aminoacyl-tRNAs. Also deacylates mischarged glycyl-tRNA(Ala), protecting cells against glycine mischarging by AlaRS. Acts via tRNA-based rather than protein-based catalysis; rejects L-amino acids rather than detecting D-amino acids in the active site. By recycling D-aminoacyl-tRNA to D-amino acids and free tRNA molecules, this enzyme counteracts the toxicity associated with the formation of D-aminoacyl-tRNA entities in vivo and helps enforce protein L-homochirality. This is D-aminoacyl-tRNA deacylase from Desulfitobacterium hafniense (strain DSM 10664 / DCB-2).